Reading from the N-terminus, the 509-residue chain is 2,3-bisphosphoglycerate-independent phosphoglycerate mutase (509 aa).

A Mn(2+)-binding site is contributed by D11. Position 35 is a phosphotyrosine (Y35). S61 contributes to the Mn(2+) binding site. S61 functions as the Phosphoserine intermediate in the catalytic mechanism. Residues H122, R152–D153, R184, R190, R260–R263, and K335 contribute to the substrate site. Residues D402, H406, D443, H444, and H461 each contribute to the Mn(2+) site.

This sequence belongs to the BPG-independent phosphoglycerate mutase family. Monomer. Requires Mn(2+) as cofactor.

It catalyses the reaction (2R)-2-phosphoglycerate = (2R)-3-phosphoglycerate. It participates in carbohydrate degradation; glycolysis; pyruvate from D-glyceraldehyde 3-phosphate: step 3/5. In terms of biological role, essential for rapid growth and for sporulation. Catalyzes the interconversion of 2-phosphoglycerate and 3-phosphoglycerate. This Bacillus cereus (strain ATCC 14579 / DSM 31 / CCUG 7414 / JCM 2152 / NBRC 15305 / NCIMB 9373 / NCTC 2599 / NRRL B-3711) protein is 2,3-bisphosphoglycerate-independent phosphoglycerate mutase.